The sequence spans 307 residues: S-methyl-5'-thioadenosine phosphorylase (307 aa).

Residues serine 16, 59 to 60, and 92 to 93 each bind phosphate; these read RH and SA. Position 198 (methionine 198) interacts with substrate. Serine 199 lines the phosphate pocket. Residue 222 to 224 participates in substrate binding; that stretch reads DYD.

It belongs to the PNP/MTAP phosphorylase family. MTAP subfamily. Homotrimer.

The protein localises to the cytoplasm. It is found in the nucleus. It catalyses the reaction S-methyl-5'-thioadenosine + phosphate = 5-(methylsulfanyl)-alpha-D-ribose 1-phosphate + adenine. It functions in the pathway amino-acid biosynthesis; L-methionine biosynthesis via salvage pathway; S-methyl-5-thio-alpha-D-ribose 1-phosphate from S-methyl-5'-thioadenosine (phosphorylase route): step 1/1. Catalyzes the reversible phosphorylation of S-methyl-5'-thioadenosine (MTA) to adenine and 5-methylthioribose-1-phosphate. Involved in the breakdown of MTA, a major by-product of polyamine biosynthesis. Responsible for the first step in the methionine salvage pathway after MTA has been generated from S-adenosylmethionine. Has broad substrate specificity with 6-aminopurine nucleosides as preferred substrates. The polypeptide is S-methyl-5'-thioadenosine phosphorylase (Schizosaccharomyces pombe (strain 972 / ATCC 24843) (Fission yeast)).